The following is a 251-amino-acid chain: Elongation factor Ts (251 aa).

Residues 82–85 (TDFV) are involved in Mg(2+) ion dislocation from EF-Tu. Residues 215–251 (QMGQKAPEPVAAAPQVEEKAPEPAAKDNPPAKGKKKK) are disordered. Residues 219 to 229 (KAPEPVAAAPQ) are compositionally biased toward low complexity. Over residues 230 to 239 (VEEKAPEPAA) the composition is skewed to basic and acidic residues.

Belongs to the EF-Ts family.

The protein resides in the cytoplasm. Associates with the EF-Tu.GDP complex and induces the exchange of GDP to GTP. It remains bound to the aminoacyl-tRNA.EF-Tu.GTP complex up to the GTP hydrolysis stage on the ribosome. The chain is Elongation factor Ts from Microcystis aeruginosa (strain NIES-843 / IAM M-2473).